The primary structure comprises 378 residues: Glutamate 5-kinase (378 aa).

Lys-20 is a binding site for ATP. Substrate-binding residues include Ser-60, Asp-147, and Asn-159. ATP is bound by residues Thr-179–Asp-180 and Thr-221–Lys-227. The 79-residue stretch at Arg-286 to Met-364 folds into the PUA domain.

The protein belongs to the glutamate 5-kinase family.

It is found in the cytoplasm. The catalysed reaction is L-glutamate + ATP = L-glutamyl 5-phosphate + ADP. It functions in the pathway amino-acid biosynthesis; L-proline biosynthesis; L-glutamate 5-semialdehyde from L-glutamate: step 1/2. Catalyzes the transfer of a phosphate group to glutamate to form L-glutamate 5-phosphate. This is Glutamate 5-kinase from Bordetella parapertussis (strain 12822 / ATCC BAA-587 / NCTC 13253).